Reading from the N-terminus, the 442-residue chain is Transforming growth factor beta-2 proprotein (442 aa).

Residues 1-20 (MHYCVLRTFLLLHLVPVALS) form the signal peptide. N-linked (GlcNAc...) asparagine glycosylation is found at Asn-72, Asn-168, and Asn-269. Intrachain disulfides connect Cys-337-Cys-346, Cys-345-Cys-408, Cys-374-Cys-439, and Cys-378-Cys-441.

This sequence belongs to the TGF-beta family. In terms of assembly, interacts with the serine proteases, HTRA1 and HTRA3. Interacts with ASPN. Interacts with MFAP5. Interacts with Transforming growth factor beta-2 (TGF-beta-2) chain; interaction is non-covalent and maintains (TGF-beta-2) in a latent state. Interacts with LRRC32/GARP; leading to regulate activation of TGF-beta-2. Interacts with NREP; the interaction results in a decrease in TGFB2 autoinduction. As to quaternary structure, transforming growth factor beta-2: Homodimer; disulfide-linked. Transforming growth factor beta-2: Interacts with TGF-beta receptors (TGFBR1 and TGFBR2), leading to signal transduction. Post-translationally, the precursor proprotein is cleaved in the Golgi apparatus to form Transforming growth factor beta-2 (TGF-beta-2) and Latency-associated peptide (LAP) chains, which remain non-covalently linked, rendering TGF-beta-2 inactive. In terms of tissue distribution, expressed in cardiomyocytes. Expressed in the aorta, primary bronchus, uterus, heart, skeletal muscle, sciatic nerve and spinal cord but not in the intestine.

The protein resides in the secreted. It is found in the extracellular space. The protein localises to the extracellular matrix. In terms of biological role, precursor of the Latency-associated peptide (LAP) and Transforming growth factor beta-2 (TGF-beta-2) chains, which constitute the regulatory and active subunit of TGF-beta-2, respectively. Functionally, required to maintain the Transforming growth factor beta-2 (TGF-beta-2) chain in a latent state during storage in extracellular matrix. Associates non-covalently with TGF-beta-2 and regulates its activation via interaction with 'milieu molecules', such as LTBP1 and LRRC32/GARP, that control activation of TGF-beta-2. Its function is as follows. Multifunctional protein that regulates various processes such as angiogenesis and heart development. Activation into mature form follows different steps: following cleavage of the proprotein in the Golgi apparatus, Latency-associated peptide (LAP) and Transforming growth factor beta-2 (TGF-beta-2) chains remain non-covalently linked rendering TGF-beta-2 inactive during storage in extracellular matrix. At the same time, LAP chain interacts with 'milieu molecules', such as LTBP1 and LRRC32/GARP, that control activation of TGF-beta-2 and maintain it in a latent state during storage in extracellular milieus. Once activated following release of LAP, TGF-beta-2 acts by binding to TGF-beta receptors (TGFBR1 and TGFBR2), which transduce signal. This Rattus norvegicus (Rat) protein is Transforming growth factor beta-2 proprotein (Tgfb2).